The chain runs to 342 residues: UDP-3-O-acylglucosamine N-acyltransferase (342 aa).

His238 functions as the Proton acceptor in the catalytic mechanism.

It belongs to the transferase hexapeptide repeat family. LpxD subfamily. In terms of assembly, homotrimer.

It carries out the reaction a UDP-3-O-[(3R)-3-hydroxyacyl]-alpha-D-glucosamine + a (3R)-hydroxyacyl-[ACP] = a UDP-2-N,3-O-bis[(3R)-3-hydroxyacyl]-alpha-D-glucosamine + holo-[ACP] + H(+). Its pathway is bacterial outer membrane biogenesis; LPS lipid A biosynthesis. Functionally, catalyzes the N-acylation of UDP-3-O-acylglucosamine using 3-hydroxyacyl-ACP as the acyl donor. Is involved in the biosynthesis of lipid A, a phosphorylated glycolipid that anchors the lipopolysaccharide to the outer membrane of the cell. The protein is UDP-3-O-acylglucosamine N-acyltransferase of Tolumonas auensis (strain DSM 9187 / NBRC 110442 / TA 4).